We begin with the raw amino-acid sequence, 120 residues long: Small ribosomal subunit protein uS11 (120 aa).

The protein belongs to the universal ribosomal protein uS11 family. As to quaternary structure, part of the 30S ribosomal subunit. Interacts with proteins S7 and S18. Binds to IF-3.

Its function is as follows. Located on the platform of the 30S subunit, it bridges several disparate RNA helices of the 16S rRNA. Forms part of the Shine-Dalgarno cleft in the 70S ribosome. This chain is Small ribosomal subunit protein uS11, found in Neorickettsia sennetsu (strain ATCC VR-367 / Miyayama) (Ehrlichia sennetsu).